Reading from the N-terminus, the 180-residue chain is Putative 3-methyladenine DNA glycosylase (180 aa).

This sequence belongs to the DNA glycosylase MPG family.

This Ehrlichia chaffeensis (strain ATCC CRL-10679 / Arkansas) protein is Putative 3-methyladenine DNA glycosylase.